The chain runs to 133 residues: Phosphoribosyl-AMP cyclohydrolase (133 aa).

Residue aspartate 77 participates in Mg(2+) binding. Cysteine 78 lines the Zn(2+) pocket. Mg(2+)-binding residues include aspartate 79 and aspartate 81. 2 residues coordinate Zn(2+): cysteine 95 and cysteine 102.

This sequence belongs to the PRA-CH family. In terms of assembly, homodimer. Mg(2+) is required as a cofactor. It depends on Zn(2+) as a cofactor.

It is found in the cytoplasm. The enzyme catalyses 1-(5-phospho-beta-D-ribosyl)-5'-AMP + H2O = 1-(5-phospho-beta-D-ribosyl)-5-[(5-phospho-beta-D-ribosylamino)methylideneamino]imidazole-4-carboxamide. It participates in amino-acid biosynthesis; L-histidine biosynthesis; L-histidine from 5-phospho-alpha-D-ribose 1-diphosphate: step 3/9. Functionally, catalyzes the hydrolysis of the adenine ring of phosphoribosyl-AMP. In Thiobacillus denitrificans (strain ATCC 25259 / T1), this protein is Phosphoribosyl-AMP cyclohydrolase.